We begin with the raw amino-acid sequence, 90 residues long: Barstar (90 aa).

It belongs to the barstar family.

The protein localises to the cytoplasm. In terms of biological role, inhibitor of the ribonuclease barnase. Forms a one-to-one non-covalent complex. This Bacillus amyloliquefaciens (Bacillus velezensis) protein is Barstar.